The primary structure comprises 672 residues: Transcription factor tau 91 kDa subunit (672 aa).

The required for DNA-binding stretch occupies residues 1-158; it reads MAVIPAKKRG…SLGQKGRPIR (158 aa). The a.T hook DNA-binding region spans 6–18; that stretch reads AKKRGRPRKSVVA. 2 disordered regions span residues 24–45 and 67–156; these read SLASPVSENSGSKRPRRNASKK and VNNV…KGRP. Acidic residues predominate over residues 71-100; that stretch reads DDTDDDDFVLNDEGDGEESDNVEIEFENEL. Positions 159–672 are sufficient for interaction with TFC8; the sequence is LLKDLSSARD…AGLLTLEYLS (514 aa). An intrachain disulfide couples cysteine 375 to cysteine 383.

Heterodimer with TFC8. Component of the TFIIIC complex composed of TFC1, TFC3, TFC4, TFC6, TFC7 and TFC8. The subunits are organized in two globular domains, tauA and tauB, connected by a proteolysis-sensitive and flexible linker. Interacts with TFC1, TFC3, TFC4 and directly with TFC8.

The protein localises to the nucleus. Its function is as follows. TFIIIC mediates tRNA and 5S RNA gene activation by binding to intragenic promoter elements. Upstream of the transcription start site, TFIIIC assembles the initiation complex TFIIIB-TFIIIC-tDNA, which is sufficient for RNA polymerase III recruitment and function. Part of the tauB domain of TFIIIC that binds boxB DNA promoter sites of tRNA and similar genes. Cooperates with TFC3 in DNA binding. This is Transcription factor tau 91 kDa subunit (TFC6) from Saccharomyces cerevisiae (strain ATCC 204508 / S288c) (Baker's yeast).